A 186-amino-acid polypeptide reads, in one-letter code: Ribosome-recycling factor (186 aa).

Belongs to the RRF family.

The protein localises to the cytoplasm. Its function is as follows. Responsible for the release of ribosomes from messenger RNA at the termination of protein biosynthesis. May increase the efficiency of translation by recycling ribosomes from one round of translation to another. This Paracidovorax citrulli (strain AAC00-1) (Acidovorax citrulli) protein is Ribosome-recycling factor.